The following is a 955-amino-acid chain: Leucine--tRNA ligase (955 aa).

A 'HIGH' region motif is present at residues P66–H77. The 'KMSKS' region motif lies at K725–S729. ATP is bound at residue K728.

It belongs to the class-I aminoacyl-tRNA synthetase family.

Its subcellular location is the cytoplasm. It catalyses the reaction tRNA(Leu) + L-leucine + ATP = L-leucyl-tRNA(Leu) + AMP + diphosphate. This is Leucine--tRNA ligase from Saccharopolyspora erythraea (strain ATCC 11635 / DSM 40517 / JCM 4748 / NBRC 13426 / NCIMB 8594 / NRRL 2338).